The following is a 346-amino-acid chain: Putative cytochrome bd menaquinol oxidase subunit II (346 aa).

9 helical membrane-spanning segments follow: residues 7–27 (ALIAISIIWGFVFIYAVMATM), 63–83 (VFIVAIVVALFSFFPGATFVL), 87–107 (LLIPGSMILLLLAIRSGFLVF), 119–139 (YISGISGFIIPAILILVLPVT), 164–184 (AYSFIGFAILSTLFLSSLLLA), 201–221 (KSALITGPISLLFAVCIMVTM), 236–256 (FSWIIASFITFVIAGIALFLP), 269–289 (LALVAIGIQYFLASYAYGRAH), and 312–332 (ALFATYIVAFIILFPGFFFFW).

Belongs to the cytochrome ubiquinol oxidase subunit 2 family.

It localises to the cell membrane. May have a role in sporulation. Can compensate for the loss of cytochrome aa3. The protein is Putative cytochrome bd menaquinol oxidase subunit II (ythB) of Bacillus subtilis (strain 168).